A 413-amino-acid polypeptide reads, in one-letter code: Na(+)-translocating NADH-quinone reductase subunit B (413 aa).

Transmembrane regions (helical) follow at residues 56–76 (MMILVWFAVFPAMFWGMYNVG), 123–143 (LLGAAYFLPIYAVVFLVGGFW), and 169–189 (IVPPTLPLWQAALGISFGVVI). An FMN phosphoryl threonine modification is found at T236. 5 helical membrane-spanning segments follow: residues 270-290 (GSIGEVSTLMILIGGAIIIFG), 297-317 (IVAGVMIGMIATAYLFNWIGS), 322-342 (LFAMPWYWHLVLGGFAFGMIF), 358-378 (WWYGGLIGVMCILIRVANPAY), and 381-401 (GMMLAILFANLFAPLFDYVVV).

It belongs to the NqrB/RnfD family. As to quaternary structure, composed of six subunits; NqrA, NqrB, NqrC, NqrD, NqrE and NqrF. It depends on FMN as a cofactor.

The protein localises to the cell inner membrane. It catalyses the reaction a ubiquinone + n Na(+)(in) + NADH + H(+) = a ubiquinol + n Na(+)(out) + NAD(+). In terms of biological role, NQR complex catalyzes the reduction of ubiquinone-1 to ubiquinol by two successive reactions, coupled with the transport of Na(+) ions from the cytoplasm to the periplasm. NqrA to NqrE are probably involved in the second step, the conversion of ubisemiquinone to ubiquinol. The chain is Na(+)-translocating NADH-quinone reductase subunit B from Yersinia pestis.